A 444-amino-acid chain; its full sequence is Glutamate-1-semialdehyde 2,1-aminomutase (444 aa).

N6-(pyridoxal phosphate)lysine is present on Lys-267.

The protein belongs to the class-III pyridoxal-phosphate-dependent aminotransferase family. HemL subfamily. As to quaternary structure, homodimer. It depends on pyridoxal 5'-phosphate as a cofactor.

The protein resides in the cytoplasm. It catalyses the reaction (S)-4-amino-5-oxopentanoate = 5-aminolevulinate. The protein operates within porphyrin-containing compound metabolism; protoporphyrin-IX biosynthesis; 5-aminolevulinate from L-glutamyl-tRNA(Glu): step 2/2. The protein is Glutamate-1-semialdehyde 2,1-aminomutase of Xylella fastidiosa (strain M12).